Here is a 454-residue protein sequence, read N- to C-terminus: Guanine deaminase (454 aa).

Residues His-82 and His-84 each contribute to the Zn(2+) site. Residues 84 to 87, 213 to 214, 240 to 243, and Asp-330 contribute to the substrate site; these read HAPQ, RF, and HISE. Residues His-240 and Asp-330 each coordinate Zn(2+). Ser-453 carries the post-translational modification Phosphoserine.

Belongs to the metallo-dependent hydrolases superfamily. ATZ/TRZ family. In terms of assembly, homodimer. Requires Zn(2+) as cofactor.

The enzyme catalyses guanine + H2O + H(+) = xanthine + NH4(+). It participates in purine metabolism; guanine degradation; xanthine from guanine: step 1/1. Functionally, catalyzes the hydrolytic deamination of guanine, producing xanthine and ammonia. The sequence is that of Guanine deaminase (Gda) from Rattus norvegicus (Rat).